Here is a 335-residue protein sequence, read N- to C-terminus: Urokinase plasminogen activator surface receptor (335 aa).

The first 22 residues, 1–22, serve as a signal peptide directing secretion; that stretch reads MGHPLLLPLLLLLHTCVPASWG. UPAR/Ly6 domains follow at residues 23–114, 115–213, and 214–305; these read LRCM…RSRY, LECI…PQNG, and HQCY…YRKG. 3 disulfides stabilise this stretch: cysteine 25–cysteine 46, cysteine 28–cysteine 34, and cysteine 39–cysteine 67. Asparagine 74 carries N-linked (GlcNAc...) asparagine glycosylation. Intrachain disulfides connect cysteine 93/cysteine 98, cysteine 117/cysteine 144, cysteine 120/cysteine 127, cysteine 137/cysteine 169, cysteine 175/cysteine 192, cysteine 193/cysteine 198, cysteine 216/cysteine 244, cysteine 219/cysteine 227, cysteine 237/cysteine 263, cysteine 269/cysteine 287, and cysteine 288/cysteine 293. Residues asparagine 184, asparagine 194, asparagine 222, and asparagine 255 are each glycosylated (N-linked (GlcNAc...) asparagine). A lipid anchor (GPI-anchor amidated glycine) is attached at glycine 305. A propeptide spans 306–335 (removed in mature form); that stretch reads AAPQPGPAHLSLTITLLMTARLWGGTLLWT.

In terms of assembly, monomer. Interacts (via the UPAR/Ly6 domains) with SRPX2. Interacts with MRC2. Interacts with FAP (seprase); the interaction occurs at the cell surface of invadopodia membrane. Interacts with SORL1 (via N-terminal ectodomain); this interaction decreases PLAUR internalization. The ternary complex composed of PLAUR-PLAU-SERPINE1 also interacts with SORL1.

It localises to the cell membrane. It is found in the cell projection. The protein resides in the invadopodium membrane. Acts as a receptor for urokinase plasminogen activator. Plays a role in localizing and promoting plasmin formation. Mediates the proteolysis-independent signal transduction activation effects of U-PA. It is subject to negative-feedback regulation by U-PA which cleaves it into an inactive form. The chain is Urokinase plasminogen activator surface receptor (PLAUR) from Chlorocebus aethiops (Green monkey).